The chain runs to 359 residues: Endosome-associated-trafficking regulator 1 (359 aa).

A phosphoserine mark is found at S18 and S74. Positions 100–125 (LLDEDEDEEDGWNGAYLPSAMEQTHS) are required for interaction with PTPN13. Residues 153-180 (SLPPWTLSDSDSRISPTGSPSADFTAHG) are disordered. Polar residues predominate over residues 159-174 (LSDSDSRISPTGSPSA). Phosphoserine occurs at positions 167 and 171. Residues 185 to 295 (DRHLRTLQIS…FKRENEALRS (111 aa)) adopt a coiled-coil conformation.

Belongs to the ENTR1 family. Found in a complex with ENTR1, PTPN13 and GIT1. Interacts with PTPN13 (via the FERM domain). Interacts (via N-terminus) with GIT1 (via N- and C-terminus); this interaction is direct. Interacts with NOD2. Interacts (via N-terminus) with IFT88. Interacts with VPS35. Phosphorylated.

The protein localises to the cytoplasm. The protein resides in the early endosome. It localises to the endosome. Its subcellular location is the recycling endosome. It is found in the midbody. The protein localises to the cytoskeleton. The protein resides in the microtubule organizing center. It localises to the centrosome. Its subcellular location is the cilium basal body. Endosome-associated protein that plays a role in membrane receptor sorting, cytokinesis and ciliogenesis. Involved in the endosome-to-plasma membrane trafficking and recycling of SNX27-retromer-dependent cargo proteins, such as GLUT1. Involved in the regulation of cytokinesis; the function may involve PTPN13 and GIT1. Plays a role in the formation of cilia. Involved in cargo protein localization, such as PKD2, at primary cilia. Involved in the presentation of the tumor necrosis factor (TNF) receptor TNFRSF1A on the cell surface, and hence in the modulation of the TNF-induced apoptosis. This chain is Endosome-associated-trafficking regulator 1, found in Bos taurus (Bovine).